The sequence spans 387 residues: Alkanesulfonate monooxygenase (387 aa).

This sequence belongs to the SsuD family.

The catalysed reaction is an alkanesulfonate + FMNH2 + O2 = an aldehyde + FMN + sulfite + H2O + 2 H(+). Functionally, catalyzes the desulfonation of aliphatic sulfonates. This is Alkanesulfonate monooxygenase from Cupriavidus metallidurans (strain ATCC 43123 / DSM 2839 / NBRC 102507 / CH34) (Ralstonia metallidurans).